The following is a 610-amino-acid chain: Prolactin receptor (610 aa).

The signal sequence occupies residues 1 to 19 (MPSALAFVLLVLNISLLKG). Residues 20–229 (QSPPGKPEIH…EMPNDFTLKD (210 aa)) lie on the Extracellular side of the membrane. 2 Fibronectin type-III domains span residues 22-122 (PPGK…IVEP) and 124-224 (PPRN…MPND). An intrachain disulfide couples C31 to C41. Residue N54 is glycosylated (N-linked (GlcNAc...) asparagine). A disulfide bridge connects residues C70 and C81. N-linked (GlcNAc...) asparagine glycosylation is found at N99 and N127. Residues D206 and H207 each coordinate Zn(2+). The short motif at 210 to 214 (WSRWS) is the WSXWS motif element. The helical transmembrane segment at 230–253 (TTVWIIVAILSAVICLIMVWAVAL) threads the bilayer. Residues 254 to 610 (KGYSMMTCIF…DPTCFMHSFH (357 aa)) are Cytoplasmic-facing. The Box 1 motif signature appears at 262–270 (IFPPVPGPK). Disordered stretches follow at residues 317–355 (DERL…HSLL), 458–482 (TGEE…TPWP), and 564–584 (AKKA…ASFT). A compositionally biased stretch (basic and acidic residues) spans 318-327 (ERLMPSHSKE). The span at 345 to 354 (GHGSYDSHSL) shows a compositional bias: low complexity.

It belongs to the type I cytokine receptor family. Type 1 subfamily. As to quaternary structure, interacts with SMARCA1. Interacts with NEK3 and VAV2 and this interaction is prolactin-dependent.

It localises to the membrane. This is a receptor for the anterior pituitary hormone prolactin. This Rattus norvegicus (Rat) protein is Prolactin receptor (Prlr).